A 250-amino-acid polypeptide reads, in one-letter code: Vacuolar iron transporter 1 (250 aa).

The Cytoplasmic segment spans residues M1 to D37. Residues I38–G58 form a helical membrane-spanning segment. Over A59–S64 the chain is Vacuolar. Residues I65–G85 form a helical membrane-spanning segment. Residues Y86–A169 lie on the Cytoplasmic side of the membrane. Positions S91 to L166 are cytoplasmic metal binding domain (MBD). Residues E103, E106, E114, E117, M150, and E154 each coordinate Fe cation. Residues F170–I190 traverse the membrane as a helical segment. The Vacuolar segment spans residues P191–H192. A helical membrane pass occupies residues A193–Y213. At A214 to A227 the chain is on the cytoplasmic side. The helical transmembrane segment at F228 to V248 threads the bilayer. Residues Q249–H250 are Vacuolar-facing.

Belongs to the CCC1 family. In terms of assembly, homodimer. The dimeric interaction is mediated by both the transmembrane domains (TMDs) and the cytoplasmic metal binding domain (MBD). As to expression, highly expressed in developing embryo and seed. Expressed in young seedlings, predominantly in the vasculature.

The protein resides in the vacuole membrane. The catalysed reaction is Fe(2+)(in) = Fe(2+)(out). In terms of biological role, vacuolar iron transporter involved in the transfer of iron ions from the cytosol to the vacuole for intracellular iron storage. Involved in regulation of cellular iron homeostasis. Vacuolar iron storage is required for seed embryo and seedling development. The chain is Vacuolar iron transporter 1 from Arabidopsis thaliana (Mouse-ear cress).